A 244-amino-acid chain; its full sequence is Probable 2-phosphosulfolactate phosphatase (244 aa).

This sequence belongs to the ComB family. Requires Mg(2+) as cofactor.

It catalyses the reaction (2R)-O-phospho-3-sulfolactate + H2O = (2R)-3-sulfolactate + phosphate. The polypeptide is Probable 2-phosphosulfolactate phosphatase (Cyanothece sp. (strain PCC 7425 / ATCC 29141)).